The following is a 168-amino-acid chain: MKTMFLLALLAFTATSAVAQLYTTCSQGYGQCQQQPQPQPQPQPQMNTCAAFLQQCSQTPHVQTQMWQASGCQLVRQQCCQPLAQISEQARCQAVCSVAQIIMRQQQGQSFGQPQQQVPVEIMRMVLQTLPLMCRVNIPQYCTTTPCSTITPAIYSIPMTATCAGGAC.

The first 19 residues, 1 to 19 (MKTMFLLALLAFTATSAVA), serve as a signal peptide directing secretion.

This sequence belongs to the prolamin family. Post-translationally, contains 7 disulfide bonds.

Seed storage protein. Not integrated in the gluten polymer through disulfide bonds, unless incorporated by reduction and reoxidation during dough making. Increases dough strength and bread volume, but decreases dough stability when added into a base wheat flour. The protein is Avenin-like a1 (AVNLA) of Triticum aestivum (Wheat).